The chain runs to 138 residues: Putative pre-16S rRNA nuclease (138 aa).

Belongs to the YqgF nuclease family.

The protein resides in the cytoplasm. Functionally, could be a nuclease involved in processing of the 5'-end of pre-16S rRNA. This chain is Putative pre-16S rRNA nuclease, found in Glaesserella parasuis serovar 5 (strain SH0165) (Haemophilus parasuis).